Here is a 318-residue protein sequence, read N- to C-terminus: ADP-L-glycero-D-manno-heptose-6-epimerase (318 aa).

Residues 10–11, 31–32, lysine 38, lysine 53, 76–80, and asparagine 93 each bind NADP(+); these read FI, DN, and QGACS. Tyrosine 141 serves as the catalytic Proton acceptor. Lysine 145 is a binding site for NADP(+). Asparagine 172 is a substrate binding site. Valine 173 and lysine 181 together coordinate NADP(+). Lysine 181 (proton acceptor) is an active-site residue. Substrate-binding positions include arginine 183, histidine 190, 204-207, arginine 212, and tyrosine 276; that span reads FEGS.

Belongs to the NAD(P)-dependent epimerase/dehydratase family. HldD subfamily. As to quaternary structure, homopentamer. The cofactor is NADP(+).

It carries out the reaction ADP-D-glycero-beta-D-manno-heptose = ADP-L-glycero-beta-D-manno-heptose. The protein operates within nucleotide-sugar biosynthesis; ADP-L-glycero-beta-D-manno-heptose biosynthesis; ADP-L-glycero-beta-D-manno-heptose from D-glycero-beta-D-manno-heptose 7-phosphate: step 4/4. In terms of biological role, catalyzes the interconversion between ADP-D-glycero-beta-D-manno-heptose and ADP-L-glycero-beta-D-manno-heptose via an epimerization at carbon 6 of the heptose. The polypeptide is ADP-L-glycero-D-manno-heptose-6-epimerase (Brachyspira hyodysenteriae (strain ATCC 49526 / WA1)).